The following is a 101-amino-acid chain: NADH-quinone oxidoreductase subunit K (101 aa).

3 helical membrane-spanning segments follow: residues 4–24 (LADYLILGALLFSLGVAGIFI), 30–50 (LVLLMCIELILLAVNMNFIAF), and 61–81 (VFVFFILTVAAAEAAIGLAIV).

The protein belongs to the complex I subunit 4L family. As to quaternary structure, NDH-1 is composed of 14 different subunits. Subunits NuoA, H, J, K, L, M, N constitute the membrane sector of the complex.

The protein resides in the cell inner membrane. It carries out the reaction a quinone + NADH + 5 H(+)(in) = a quinol + NAD(+) + 4 H(+)(out). NDH-1 shuttles electrons from NADH, via FMN and iron-sulfur (Fe-S) centers, to quinones in the respiratory chain. The immediate electron acceptor for the enzyme in this species is believed to be ubiquinone. Couples the redox reaction to proton translocation (for every two electrons transferred, four hydrogen ions are translocated across the cytoplasmic membrane), and thus conserves the redox energy in a proton gradient. In Alkalilimnicola ehrlichii (strain ATCC BAA-1101 / DSM 17681 / MLHE-1), this protein is NADH-quinone oxidoreductase subunit K.